Reading from the N-terminus, the 126-residue chain is Flagellar protein FliT (126 aa).

Positions 1 to 50 are required for homodimerization; it reads MVSPHRLLKDYQQLLSLSQKILHLAISGQWDTLVEQEIVYVQSVEGLVNT. The fliD binding stretch occupies residues 60 to 98; the sequence is MRLHLRQILQEVMDNEAKVKQLLQKRMDELSSLMGQSLK.

This sequence belongs to the FliT family. As to quaternary structure, homodimer. Interacts with FliD and FlhC.

It localises to the cytoplasm. The protein localises to the cytosol. Functionally, dual-function protein that regulates the transcription of class 2 flagellar operons and that also acts as an export chaperone for the filament-capping protein FliD. As a transcriptional regulator, acts as an anti-FlhDC factor; it directly binds FlhC, thus inhibiting the binding of the FlhC/FlhD complex to class 2 promoters, resulting in decreased expression of class 2 flagellar operons. As a chaperone, effects FliD transition to the membrane by preventing its premature polymerization, and by directing it to the export apparatus. This Pectobacterium atrosepticum (strain SCRI 1043 / ATCC BAA-672) (Erwinia carotovora subsp. atroseptica) protein is Flagellar protein FliT.